The chain runs to 28 residues: M-poneritoxin-Da4b (28 aa).

Position 28 is an alanine amide (Ala-28).

Expressed by the venom gland.

Its subcellular location is the secreted. Its function is as follows. The synthetic peptide has antimicrobial activity against the Gram-positive bacteria B.amyloliquefacies S499 (MIC=0.05 mM), L.monocytogenes 2231 and S.aureus ATCC 29213, against the Gram-negative bacteria P.putida BTP1, P.aeruginosa PaO1 and E.coli ATCC 10536, and against the fungi S.cerevisiae, R.mucilaginosa and C.cucumerinum. It is not active against the fungi F.oxysporum and B.cinerea. The polypeptide is M-poneritoxin-Da4b (Dinoponera australis (Giant neotropical hunting ant)).